Consider the following 372-residue polypeptide: THAP domain-containing protein 5 (372 aa).

The segment at 1–85 (MTRYCAATRC…LKPNAIPTLF (85 aa)) adopts a THAP-type zinc-finger fold. The stretch at 306–362 (TDRHYLRQKIAKLQSKIAVLEAQENATLSRLRLLESVIAKLKQENLLSDEKLKILEN) forms a coiled coil.

It is found in the nucleus. This chain is THAP domain-containing protein 5 (thap5), found in Xenopus laevis (African clawed frog).